The following is a 987-amino-acid chain: Ras guanine nucleotide exchange factor efc25 (987 aa).

A compositionally biased stretch (basic and acidic residues) spans 1–10 (MRRPNLDRLR). 3 disordered regions span residues 1–50 (MRRP…STMS), 100–130 (FSST…PEIR), and 529–552 (NANT…ISRS). Positions 19-39 (TSVSKPSTPSYSTYSLSPTFS) are enriched in low complexity. 3 stretches are compositionally biased toward polar residues: residues 40 to 50 (DKSVLSPSTMS), 102 to 111 (STHSLTRQPS), and 540 to 552 (RQTN…ISRS). Serine 552 carries the post-translational modification Phosphoserine. Residues 590-723 (SDNNVKGGTL…VILSEIDNLW (134 aa)) form the N-terminal Ras-GEF domain. The Ras-GEF domain maps to 752–985 (TPEEFASQMT…FDKSLSLEPR (234 aa)).

The protein resides in the cytoplasm. Has a role in chromosome segregation and cell morphology upstream of the ras1-scd1 pathway. Promotes the exchange of ras1-bound GDP by GTP leading to its activation. The sequence is that of Ras guanine nucleotide exchange factor efc25 (efc25) from Schizosaccharomyces pombe (strain 972 / ATCC 24843) (Fission yeast).